The sequence spans 183 residues: 1,6-anhydro-N-acetylmuramyl-L-alanine amidase AmpD (183 aa).

An N-acetylmuramoyl-L-alanine amidase domain is found at 30 to 167; sequence LLVVHNISLP…APDRKTDPGP (138 aa). His-34 serves as a coordination point for Zn(2+). The active-site Proton acceptor is Glu-116. The Zn(2+) site is built by His-154 and Asp-164.

It belongs to the N-acetylmuramoyl-L-alanine amidase 2 family. Zn(2+) is required as a cofactor.

It localises to the cytoplasm. The enzyme catalyses Hydrolyzes the link between N-acetylmuramoyl residues and L-amino acid residues in certain cell-wall glycopeptides.. Involved in cell wall peptidoglycan recycling. Specifically cleaves the amide bond between the lactyl group of N-acetylmuramic acid and the alpha-amino group of the L-alanine in degradation products containing an anhydro N-acetylmuramyl moiety. Is also involved in beta-lactamase induction. This Escherichia coli (strain K12) protein is 1,6-anhydro-N-acetylmuramyl-L-alanine amidase AmpD (ampD).